A 197-amino-acid chain; its full sequence is Imidazoleglycerol-phosphate dehydratase (197 aa).

It belongs to the imidazoleglycerol-phosphate dehydratase family.

It is found in the cytoplasm. It catalyses the reaction D-erythro-1-(imidazol-4-yl)glycerol 3-phosphate = 3-(imidazol-4-yl)-2-oxopropyl phosphate + H2O. It functions in the pathway amino-acid biosynthesis; L-histidine biosynthesis; L-histidine from 5-phospho-alpha-D-ribose 1-diphosphate: step 6/9. The polypeptide is Imidazoleglycerol-phosphate dehydratase (Bradyrhizobium sp. (strain ORS 278)).